A 158-amino-acid chain; its full sequence is Large ribosomal subunit protein uL15 (158 aa).

Disordered stretches follow at residues 1-53 and 138-158; these read MRIH…FEGG and ESAGGSCQDLSDTSNAPSNNE. A compositionally biased stretch (gly residues) spans 23-35; the sequence is ISAGQGASGGFGM. The segment covering 145–158 has biased composition (polar residues); it reads QDLSDTSNAPSNNE.

The protein belongs to the universal ribosomal protein uL15 family. Part of the 50S ribosomal subunit.

Binds to the 23S rRNA. The protein is Large ribosomal subunit protein uL15 of Crocosphaera subtropica (strain ATCC 51142 / BH68) (Cyanothece sp. (strain ATCC 51142)).